The following is a 309-amino-acid chain: Taste receptor type 2 member 114 (309 aa).

The Extracellular segment spans residues 1–7; it reads MLSTMEG. Residues 8-28 traverse the membrane as a helical segment; it reads VLLSVSTSEAVLGIVGNTFIA. The Cytoplasmic segment spans residues 29–43; sequence LVNCMDYNRNKKLSN. The chain crosses the membrane as a helical span at residues 44–64; sequence IGFILTGLAISRICLVLILIT. The Extracellular portion of the chain corresponds to 65–87; it reads EAYIKIFYPQLLSPVNIIELISY. The helical transmembrane segment at 88–108 threads the bilayer; it reads LWIIICQLNVWFATSLSIFYF. The Cytoplasmic segment spans residues 109–127; that stretch reads LKIANFSHYIFVWLKRRID. Residues 128–148 traverse the membrane as a helical segment; the sequence is LVFFFLIGCLLISWLFSFPVV. Residues 149–182 lie on the Extracellular side of the membrane; that stretch reads AKMVKDNKMLYINTSWQIHMKKSELIINYVFTNG. N-linked (GlcNAc...) asparagine glycosylation occurs at asparagine 161. The chain crosses the membrane as a helical span at residues 183 to 203; it reads GVFLFFMIMLIVCFLLIISLW. The Cytoplasmic segment spans residues 204–233; it reads RHRRQMESNKLGFRDLNTEVHVRTIKVLLS. Residues 234–254 traverse the membrane as a helical segment; it reads FIILFILHFMGITINVICLLI. Over 255–259 the chain is Extracellular; the sequence is PESNL. The chain crosses the membrane as a helical span at residues 260–280; sequence LFMFGLTTAFIYPGCHSLILI. Over 281–309 the chain is Cytoplasmic; the sequence is LANSRLKQCSVMILQLLKCCENGKELRDT.

This sequence belongs to the G-protein coupled receptor T2R family.

It localises to the membrane. Putative taste receptor which may play a role in the perception of bitterness. The sequence is that of Taste receptor type 2 member 114 from Mus musculus (Mouse).